Reading from the N-terminus, the 260-residue chain is Acetylglutamate kinase (260 aa).

Substrate contacts are provided by residues 46 to 47, arginine 68, and asparagine 160; that span reads GG.

Belongs to the acetylglutamate kinase family. ArgB subfamily.

Its subcellular location is the cytoplasm. It carries out the reaction N-acetyl-L-glutamate + ATP = N-acetyl-L-glutamyl 5-phosphate + ADP. It functions in the pathway amino-acid biosynthesis; L-arginine biosynthesis; N(2)-acetyl-L-ornithine from L-glutamate: step 2/4. Its function is as follows. Catalyzes the ATP-dependent phosphorylation of N-acetyl-L-glutamate. The chain is Acetylglutamate kinase from Shewanella baltica (strain OS223).